Consider the following 72-residue polypeptide: DNA-directed RNA polymerase subunit epsilon (72 aa).

Belongs to the RNA polymerase subunit epsilon family. As to quaternary structure, RNAP is composed of a core of 2 alpha, a beta and a beta' subunit. The core is associated with a delta subunit, and at least one of epsilon or omega. When a sigma factor is associated with the core the holoenzyme is formed, which can initiate transcription.

The enzyme catalyses RNA(n) + a ribonucleoside 5'-triphosphate = RNA(n+1) + diphosphate. A non-essential component of RNA polymerase (RNAP). The protein is DNA-directed RNA polymerase subunit epsilon of Lactiplantibacillus plantarum (strain ATCC BAA-793 / NCIMB 8826 / WCFS1) (Lactobacillus plantarum).